Consider the following 272-residue polypeptide: GPN-loop GTPase 3 (272 aa).

13–18 (GAGKST) contributes to the GTP binding site. Residues 70-72 (GPN) carry the Gly-Pro-Asn (GPN)-loop; involved in dimer interface motif. 173–176 (SKLD) provides a ligand contact to GTP.

It belongs to the GPN-loop GTPase family. In terms of assembly, heterodimers with NPA3/GPN1 or GPN2. Binds to RNA polymerase II (RNAPII).

In terms of biological role, small GTPase required for proper nuclear localization of RNA polymerase II and III (RNAPII and RNAPIII). May act at an RNAP assembly step prior to nuclear import. Promotes sister chromatid separation during anaphase. This Saccharomyces cerevisiae (strain ATCC 204508 / S288c) (Baker's yeast) protein is GPN-loop GTPase 3.